The chain runs to 130 residues: Small ribosomal subunit protein uS9 (130 aa).

It belongs to the universal ribosomal protein uS9 family.

The polypeptide is Small ribosomal subunit protein uS9 (Buchnera aphidicola subsp. Baizongia pistaciae (strain Bp)).